Reading from the N-terminus, the 81-residue chain is Omega-conotoxin-like TxMKLT1-0223 (81 aa).

A signal peptide spans 1-22 (MKLTCMMIVAVLFLTAWTFVTA). Positions 23-52 (VPHSSNALENLYLKARHEMENPEASKLNTR) are excised as a propeptide. 3 disulfide bridges follow: C55–C72, C62–C76, and C71–C80.

This sequence belongs to the conotoxin O1 superfamily. In terms of tissue distribution, expressed by the venom duct.

It is found in the secreted. In terms of biological role, omega-conotoxins act at presynaptic membranes, they bind and block voltage-gated calcium channels (Cav). This is Omega-conotoxin-like TxMKLT1-0223 from Conus textile (Cloth-of-gold cone).